The sequence spans 646 residues: Major capsid protein (646 aa).

The protein belongs to the NCLDV major capsid protein family. Homotrimer. The membrane-bound form, but not the cytosolic one, assembles into large complexes. Interacts with the minor capsid proteins M1249L and p17; these interactions form a rigid zipper structure that stabilizes the capsomers.

The protein resides in the virion. The protein localises to the host endoplasmic reticulum membrane. It localises to the host cytoplasm. It is found in the host cytosol. Functionally, capsid protein that self-assembles to form the pseudo-hexameric capsomers of the icosahedral capsid. The capsid is constructed of 2760 pseudo-hexameric capsomers and 12 pentameric capsomers, with a T=277 symmetry, about 200 nm in diameter. The capsid encapsulates the DNA-containing nucleoid, the core shell and the inner membrane. Plays an essential role in virion assembly. Involved in virus attachment to the host cell. The protein is Major capsid protein of African swine fever virus (isolate Pig/Kenya/KEN-50/1950) (ASFV).